An 84-amino-acid chain; its full sequence is uncharacterized protein (84 aa).

Belongs to the chlamydial CPn_0710/CT_666/TC_0037 family.

This is an uncharacterized protein from Chlamydia pneumoniae (Chlamydophila pneumoniae).